Here is a 250-residue protein sequence, read N- to C-terminus: Probable 2' cyclic ADP-D-ribose synthase TcpB (250 aa).

The interval 1 to 46 (MSKEKQAQSKAHKAQQAISSAKSLSTQKSKMSELERATRDGAAIGK) is disordered. Positions 1-117 (MSKEKQAQSK…TASATMEAEE (117 aa)) are necessary and sufficient for phosphoinositide binding. A compositionally biased stretch (low complexity) spans 14-23 (AQQAISSAKS). Residues 30–39 (KMSELERATR) are compositionally biased toward basic and acidic residues. The TIR domain occupies 117-250 (EEYDFFISHA…EIAKELHSLI (134 aa)). Glutamate 192 is an active-site residue.

Homodimer; may also form oligomers. Interacts with host TIRAP. Interacts with host MYD88. Interaction with host MYD88 was not confirmed by another study. Interacts with host TLR4. Abolishes the interaction of host TIRAP with TLR4.

It is found in the secreted. The protein resides in the host cell membrane. It carries out the reaction NAD(+) + H2O = ADP-D-ribose + nicotinamide + H(+). It catalyses the reaction NAD(+) = 2'cADPR + nicotinamide + H(+). Functionally, virulence factor that interferes with host Toll-like receptor 2 (TLR2) and TLR4 signaling, resulting in the reduction of dendritic cell maturation, inhibition of pro-inflammatory cytokine secretion and impaired NF-kappa-B activation in macrophages. Interferes with host TLR4 signaling by abolishing host TLR4-TIRAP interaction (but not host TIRAP-MYD88 interaction) and its downstream signaling. Inhibits host TLR 2 induced NF-kappa-B activation and TNF (tumor necrosis factor) secretion. Binds phosphoinositide (PtdIns) via its N-terminal domain. Has NAD(+) hydrolase (NADase) activity, catalyzes cleavage of NAD(+) into ADP-D-ribose (ADPR) and nicotinamide. Also generates a cyclization variant of cyclic ADPR (cADPR), termed v-cADPR (probably 2'cADPR). This chain is Probable 2' cyclic ADP-D-ribose synthase TcpB, found in Brucella melitensis biotype 1 (strain ATCC 23456 / CCUG 17765 / NCTC 10094 / 16M).